The primary structure comprises 129 residues: uncharacterized protein (129 aa).

2 helical membrane-spanning segments follow: residues 35-55 and 98-118; these read IVDG…WKIP and ILLL…IILL.

It is found in the membrane. This is an uncharacterized protein from Saccharomyces cerevisiae (strain ATCC 204508 / S288c) (Baker's yeast).